Consider the following 137-residue polypeptide: Insulin-like peptide 2 (137 aa).

A signal peptide spans 1-26 (MSKPLSFISMVAVILLASSTVKLAQG). 3 disulfide bridges follow: Cys-29–Cys-119, Cys-41–Cys-132, and Cys-118–Cys-123. A propeptide spans 53-104 (AMPGADSDLDALNPLQFVQEFEEEDNSISEPLRSALFPGSYLGGVLNSLAEV) (connecting peptide).

The protein belongs to the insulin family. In terms of assembly, heterodimer of a B chain and an A chain linked by two disulfide bonds. As to expression, broadly expressed at a low level in the embryonic mesoderm, beginning at stage 12. Expressed at a high level in the embryonic anterior midgut, with expression diminishing at late stage 16. Expressed at a low level in larval imaginal disks. Expressed at a high level in larval salivary glands and in seven cells of each larval brain hemisphere that may correspond to neurosecretory cells.

It localises to the secreted. Its function is as follows. Possible ligand of InR/insulin-like receptor. Functionally, plays a role in regulating body size by increasing cell size and cell number of individual organs. Probably mediates its growth effects by acting as a ligand for the insulin receptor and transducing a signal via the Chico/PI3K/Akt(PKB) pathway. The polypeptide is Insulin-like peptide 2 (Drosophila melanogaster (Fruit fly)).